The sequence spans 334 residues: MIIYILFSLLAAVIVHLVYKKQTGFKLKGKHIVVVGGSSGIGKELVYELLKENIASISVISRSLDKLRSVVDDCPSEVCTKSTPLNVGSLKSKIEIYSCDITNKIKVKETIAQIVSKNQGGKIDCLINCAGFAIPGYFIEQDEEIFEKTMQLDYFGSLYATKEVVPLMIENGGQGGHIVFVSSTCGLVGVPGYSTYCPSKFALRGLAETLRSELKPYKITFSVVYPPDTDTPGYQQENLTKPEETVAISGGGKAVSPLEVAKSIVSGIKNGDYHIAYDVPTKLCAVLSPGLTPFYFSFFDILLAPICRLVGIIAMNQNDAEVLKSWKKRNQLKK.

A signal peptide spans 1–20 (MIIYILFSLLAAVIVHLVYK). NADPH-binding residues include G36, S38, S39, G40, R62, K66, D100, and I101. Residues 36-40 (GGSSG) carry the GXSXG motif. The active-site Proton donor is S182. The Proton acceptor role is filled by Y196. Positions 196 and 200 each coordinate NADP(+). Catalysis depends on K200, which acts as the Lowers pKa of active site Tyr.

The protein belongs to the short-chain dehydrogenases/reductases (SDR) family.

The protein resides in the endoplasmic reticulum. It carries out the reaction sphinganine + NADP(+) = 3-oxosphinganine + NADPH + H(+). It functions in the pathway lipid metabolism; sphingolipid metabolism. In terms of biological role, catalyzes the reduction of 3'-oxosphinganine (3-ketodihydrosphingosine/KDS) to sphinganine (dihydrosphingosine/DHS), the second step of de novo sphingolipid biosynthesis. The sequence is that of 3-ketodihydrosphingosine reductase (ksrA-1) from Dictyostelium discoideum (Social amoeba).